A 264-amino-acid chain; its full sequence is S-adenosylmethionine decarboxylase proenzyme (264 aa).

Catalysis depends on Ser-112, which acts as the Schiff-base intermediate with substrate; via pyruvic acid. The residue at position 112 (Ser-112) is a Pyruvic acid (Ser); by autocatalysis. Residue His-117 is the Proton acceptor; for processing activity of the active site. Cys-140 functions as the Proton donor; for catalytic activity in the catalytic mechanism.

It belongs to the prokaryotic AdoMetDC family. Type 2 subfamily. As to quaternary structure, heterooctamer of four alpha and four beta chains arranged as a tetramer of alpha/beta heterodimers. Pyruvate is required as a cofactor. In terms of processing, is synthesized initially as an inactive proenzyme. Formation of the active enzyme involves a self-maturation process in which the active site pyruvoyl group is generated from an internal serine residue via an autocatalytic post-translational modification. Two non-identical subunits are generated from the proenzyme in this reaction, and the pyruvate is formed at the N-terminus of the alpha chain, which is derived from the carboxyl end of the proenzyme. The post-translation cleavage follows an unusual pathway, termed non-hydrolytic serinolysis, in which the side chain hydroxyl group of the serine supplies its oxygen atom to form the C-terminus of the beta chain, while the remainder of the serine residue undergoes an oxidative deamination to produce ammonia and the pyruvoyl group blocking the N-terminus of the alpha chain.

It catalyses the reaction S-adenosyl-L-methionine + H(+) = S-adenosyl 3-(methylsulfanyl)propylamine + CO2. It participates in amine and polyamine biosynthesis; S-adenosylmethioninamine biosynthesis; S-adenosylmethioninamine from S-adenosyl-L-methionine: step 1/1. In terms of biological role, catalyzes the decarboxylation of S-adenosylmethionine to S-adenosylmethioninamine (dcAdoMet), the propylamine donor required for the synthesis of the polyamines spermine and spermidine from the diamine putrescine. This is S-adenosylmethionine decarboxylase proenzyme from Salmonella choleraesuis (strain SC-B67).